Consider the following 865-residue polypeptide: MADNLYDSSIIEKQLKEKIENALSIHSYPTAIFFSDKLLNLVTIHSKEYVKILYILCDALYLDRQFQRSSYLIQKYLNAIEEIDKKGEDYQYIDDIHSHHHNQQQNIFYKRIKKEKEDEQYTNTILKLKYLAAKCKIETNEFDQCLQILNKDNDSSENMDDENNNINNNNNKIKKENEINNDNCDDDDDDDDDDDDDDDDEKDSNQLLKFYTNSKSNKSKDISENNSNNENTTKESINKNNTDSSSIDNKNNNKNNNNNNNNNNNNNNNNNNNNNNNNNNNNNNNNNNNNNNFNKETLIIRSSISCLKGKCYESMDNLKKAKFWYIKALLTDYNCFEAFESLTKNHLLTYQEEISLLEKLKFSSDDSWIKEIYSLSLKKYDSPKFTFNYKYLELYDSLNHQNSNNNTFGANNNNNNNNNNNNNNNNNNNNNSNNDISTEDLISVKTLSSSSSSPSKKQENNNLITINEIRKKLIECNDIQTWISEYYFYRHQFQESYSITKRILKQDKYYSNQICLMVNISSMFELQLTNELYFTCHQLVDSFTSSLNNGSHGGSHGGGGGGSHGGSSGNGGAISWYGVACYYHLIQNSDQTQRFFTKSTTLDSRMGASWLGFGHFFASKGEHDQAMAAYRTSSRLLTGCHLPLLCIGMELIRVHNLNLASQYILQAKDICPYDPMIFNELGIIEYKNSQYNEAIKLFETALEICKIKSKASSSSSSSSNYHNLNLSNISFSGVGSSGIGNNNNNNNNRRTTTTTTTTSNNQKKNSSNNKTMIAYLESWEPTIYNLAHCYRKLRKFELALHYYTMSLSLLPNNPSTYSALGFTHHLQGNFDEAIDYYHQSLSIRDDTFTNVLLHKALSLSILQYD.

TPR repeat units lie at residues 11 to 42 (IEKQLKEKIENALSIHSYPTAIFFSDKLLNLV), 46 to 75 (SKEYVKILYILCDALYLDRQFQRSSYLIQK), and 88 to 149 (EDYQ…LQIL). Residues 153–293 (NDSSENMDDE…NNNNNNNNNF (141 aa)) form a disordered region. Acidic residues predominate over residues 183–202 (NCDDDDDDDDDDDDDDDDEK). Positions 249–292 (NKNNNKNNNNNNNNNNNNNNNNNNNNNNNNNNNNNNNNNNNNNN) are enriched in low complexity. TPR repeat units lie at residues 300 to 331 (IRSSISCLKGKCYESMDNLKKAKFWYIKALLT), 336 to 359 (FEAFESLTKNHLLTYQEEISLLEK), 366 to 438 (DSWI…DIST), 478 to 506 (DIQTWISEYYFYRHQFQESYSITKRILKQ), 515 to 542 (CLMVNISSMFELQLTNELYFTCHQLVDS), 573 to 602 (AISWYGVACYYHLIQNSDQTQRFFTKSTTL), 607 to 635 (GASWLGFGHFFASKGEHDQAMAAYRTSSR), 642 to 670 (LPLLCIGMELIRVHNLNLASQYILQAKDI), and 675 to 709 (PMIFNELGIIEYKNSQYNEAIKLFETALEICKIKS). The segment covering 403 to 434 (SNNNTFGANNNNNNNNNNNNNNNNNNNNNSNN) has biased composition (low complexity). Residues 403 to 436 (SNNNTFGANNNNNNNNNNNNNNNNNNNNNSNNDI) form a disordered region. A disordered region spans residues 738–767 (GIGNNNNNNNNRRTTTTTTTTSNNQKKNSS). TPR repeat units lie at residues 777-809 (ESWEPTIYNLAHCYRKLRKFELALHYYTMSLSL) and 814-843 (PSTYSALGFTHHLQGNFDEAIDYYHQSLSI).

Belongs to the APC6/CDC16 family. The APC/C is composed of at least 13 subunits that stay tightly associated throughout the cell cycle: anapc1, anapc2, anapc3, anapc4, anapc5, anapc6, anapc7, anapc8, anapc10, anapc11, cdc20, cdc26 and cdh1.

It localises to the nucleus. It functions in the pathway protein modification; protein ubiquitination. Component of the anaphase promoting complex/cyclosome (APC/C), a cell cycle-regulated E3 ubiquitin-protein ligase complex that controls progression through mitosis and the G1 phase of the cell cycle. This chain is Anaphase-promoting complex subunit 6 (anapc6), found in Dictyostelium discoideum (Social amoeba).